The sequence spans 545 residues: E3 ubiquitin-protein ligase ipaH9.8 (545 aa).

Residues 1-242 (MLPINNNFSL…YHGPRIYFSM (242 aa)) are interaction with target proteins. 8 LRR repeats span residues 57-77 (NSDE…NLPA), 78-99 (QITL…PVTL), 100-117 (KKLY…VLPP), 118-139 (ALES…PDSL), 140-157 (LTMN…SLPQ), 158-179 (ALKN…SEGN), 182-203 (VVRE…ILNL), and 205-228 (NECS…QRLT). The tract at residues 243–250 (SDGQQNTL) is linker. The interval 251-545 (HRPLADAVTA…PENGSQLHHS (295 aa)) is E3 ubiquitin-protein ligase catalytic domain. One can recognise an NEL domain in the interval 253–545 (PLADAVTAWF…PENGSQLHHS (293 aa)). Cysteine 337 serves as the catalytic Glycyl thioester intermediate.

This sequence belongs to the LRR-containing bacterial E3 ligase family. Also interacts with human and mouse U2AF1 (U2AF35). Post-translationally, autoubiquitinated (in vitro). Ubiquitinated in the presence of host E1 ubiquitin-activating enzyme, E2 ubiquitin-conjugating enzyme and ubiquitin.

The protein resides in the secreted. Its subcellular location is the host cytoplasm. The protein localises to the host nucleus. The enzyme catalyses S-ubiquitinyl-[E2 ubiquitin-conjugating enzyme]-L-cysteine + [acceptor protein]-L-lysine = [E2 ubiquitin-conjugating enzyme]-L-cysteine + N(6)-ubiquitinyl-[acceptor protein]-L-lysine.. The protein operates within protein modification; protein ubiquitination. Its activity is regulated as follows. Exists in an autoinhibited state in the absence of substrate protein, due to interactions of the leucine-rich repeats with NEL domain. Is activated upon binding to a substrate protein. Functionally, effector E3 ubiquitin ligase that interferes with host's ubiquitination pathway and modulates the acute inflammatory responses, thus facilitating bacterial colonization within the host cell. Interacts with IKBKG (NEMO) and TNIP1 (ABIN-1), a ubiquitin-binding adapter protein, which results in TNIP1-dependent 'Lys-27'-linked polyubiquitination of IKBKG. Consequently, polyubiquitinated IKBKG undergoes proteasome-dependent degradation, which perturbs NF-kappa-B activation during bacterial infection. Mediates polyubiquitination of host U2AF1, leading to its proteasomal degradation. Catalyzes 'Lys-48'-linked polyubiquitination and subsequent degradation of a subset of host guanylate-binding proteins (GBP1, GBP2, GBP4 and GBP6), thereby suppressing host cell defense. In contrast, host GBP3 and GBP7 are not ubiquitinated by IpaH9.8. Uses UBE2D2 (UBCH5B) as an E2 ubiquitin-conjugating enzyme. This Shigella flexneri protein is E3 ubiquitin-protein ligase ipaH9.8.